The following is a 697-amino-acid chain: MMRPVVVKEKRVNESHIHAVEDEVRQAKTMDRDIVKHAMKQSVAKLNPKVMIKNPIMFVVEIGFVITFILSFFPSHSSSIPGWFNITVSLILLFTVLFANFAEALAEGRGKAQADSLKQSKKDVFANVVKENGEIVQVSATDLRKDDVVIVKQGEMIPSDGEVIKGLASVDESAITGESAPVIKEAGGDFCSVTGGTMVVSDEITIVITSNPGESFIDKMISLVEGAARQKTPNEIALNTVLTSLTLIFLIVVVTLPIFTNYLGFQIDTAVLVALLVCLIPTTIGGLLSAIGIAGMDRVTKFNVLAMSGKAVEAAGDINTIILDKTGTITFGNRMAHTLLPVGNETIEQVGKWAAISSVLDETPEGRSVIEHVQAKSISYNKELAEQGEFIPFKAETRMSGVDLQDGTKVRKGAVGSVIEWVKSQGGTIPKDVNQKADFISKEGGTPLVVAVDNRIYGLIYLKDTVKPGMRERFEQLRQMGIKTVMCTGDNPLTAATIAKEAGVDEFVAECKPEDKIAVIKAEQDKGKLVAMTGDGTNDAPALAQADVGLAMNSGTTAAKEAANMIDLDSNPTKIIEVVGIGKQLLMTRGALTTFSIANDIAKYFAIIPAMFTLAIPQMEALNIMKLTSPLSAILSALLFNAVIIPLLIPLAMKGIAYKPMSSNALLGRNLLIYGLGGVIVPFIGIKVIDIIVGLFI.

The next 4 helical transmembrane spans lie at 55 to 75 (PIMFVVEIGFVITFILSFFPS), 79 to 99 (SIPGWFNITVSLILLFTVLFA), 245 to 265 (LTLIFLIVVVTLPIFTNYLGF), and 271 to 291 (VLVALLVCLIPTTIGGLLSAI). Residue Asp324 is the 4-aspartylphosphate intermediate of the active site. Residues Asp361, Glu365, 393–400 (FKAETRMS), and Lys412 each bind ATP. Mg(2+)-binding residues include Asp535 and Asp539. Helical transmembrane passes span 605-625 (FAIIPAMFTLAIPQMEALNIM), 633-653 (AILSALLFNAVIIPLLIPLAM), and 677-697 (GGVIVPFIGIKVIDIIVGLFI).

This sequence belongs to the cation transport ATPase (P-type) (TC 3.A.3) family. Type IA subfamily. The system is composed of three essential subunits: KdpA, KdpB and KdpC.

The protein localises to the cell membrane. It catalyses the reaction K(+)(out) + ATP + H2O = K(+)(in) + ADP + phosphate + H(+). Its function is as follows. Part of the high-affinity ATP-driven potassium transport (or Kdp) system, which catalyzes the hydrolysis of ATP coupled with the electrogenic transport of potassium into the cytoplasm. This subunit is responsible for energy coupling to the transport system and for the release of the potassium ions to the cytoplasm. This Bacillus cereus (strain AH820) protein is Potassium-transporting ATPase ATP-binding subunit.